Consider the following 145-residue polypeptide: Leghemoglobin (145 aa).

A Globin domain is found at 3 to 145 (GFTEKQEALV…ELAAALKKAF (143 aa)). Nitrated tyrosine occurs at positions 26 and 31. H62 contributes to the O2 binding site. 3 residues coordinate heme b: K65, H93, and K96. Position 134 is a nitrated tyrosine (Y134).

Belongs to the plant globin family. Monomer. Nitrated in effective nodules and particularly in hypoxic conditions; this mechanism may play a protective role in the symbiosis by buffering toxic peroxynitrite NO(2)(-). Nitration level decrease during nodule senescence. As to expression, root nodules.

Its subcellular location is the cytoplasm. It localises to the cytosol. The protein resides in the nucleus. Functionally, leghemoglobin that reversibly binds oxygen O(2) through a pentacoordinated heme iron. In root nodules, facilitates the diffusion of oxygen to the bacteroids while preventing the bacterial nitrogenase from being inactivated by buffering dioxygen, nitric oxide and carbon monoxide, and promoting the formation of reactive oxygen species (ROS, e.g. H(2)O(2)). This role is essential for symbiotic nitrogen fixation (SNF). This is Leghemoglobin from Psophocarpus tetragonolobus (Winged bean).